The primary structure comprises 507 residues: Flagellar hook-associated protein 1 (507 aa).

This sequence belongs to the flagella basal body rod proteins family.

The protein localises to the secreted. It localises to the bacterial flagellum. The protein is Flagellar hook-associated protein 1 (flgK) of Bacillus subtilis (strain 168).